A 551-amino-acid chain; its full sequence is Glucose-6-phosphate isomerase (551 aa).

The Proton donor role is filled by Glu356. Catalysis depends on residues His387 and Lys515.

Belongs to the GPI family.

It is found in the cytoplasm. The enzyme catalyses alpha-D-glucose 6-phosphate = beta-D-fructose 6-phosphate. Its pathway is carbohydrate biosynthesis; gluconeogenesis. It functions in the pathway carbohydrate degradation; glycolysis; D-glyceraldehyde 3-phosphate and glycerone phosphate from D-glucose: step 2/4. In terms of biological role, catalyzes the reversible isomerization of glucose-6-phosphate to fructose-6-phosphate. This is Glucose-6-phosphate isomerase from Blochmanniella pennsylvanica (strain BPEN).